A 434-amino-acid chain; its full sequence is UDP-N-acetylmuramate--L-alanine ligase (434 aa).

Residue 108 to 114 coordinates ATP; the sequence is GSHGKTT.

This sequence belongs to the MurCDEF family.

It localises to the cytoplasm. It carries out the reaction UDP-N-acetyl-alpha-D-muramate + L-alanine + ATP = UDP-N-acetyl-alpha-D-muramoyl-L-alanine + ADP + phosphate + H(+). The protein operates within cell wall biogenesis; peptidoglycan biosynthesis. Cell wall formation. This chain is UDP-N-acetylmuramate--L-alanine ligase, found in Geobacillus thermodenitrificans (strain NG80-2).